The chain runs to 218 residues: Probable septum site-determining protein MinC (218 aa).

The protein belongs to the MinC family. In terms of assembly, interacts with MinD and FtsZ.

In terms of biological role, cell division inhibitor that blocks the formation of polar Z ring septums. Rapidly oscillates between the poles of the cell to destabilize FtsZ filaments that have formed before they mature into polar Z rings. Prevents FtsZ polymerization. The chain is Probable septum site-determining protein MinC from Kosmotoga olearia (strain ATCC BAA-1733 / DSM 21960 / TBF 19.5.1).